Reading from the N-terminus, the 521-residue chain is Glucose-1-phosphate adenylyltransferase large subunit 3, chloroplastic (521 aa).

The N-terminal 61 residues, 1–61 (MDSCCNFSLG…RKLRPGVAYA (61 aa)), are a transit peptide targeting the chloroplast.

This sequence belongs to the bacterial/plant glucose-1-phosphate adenylyltransferase family. As to quaternary structure, heterotetramer. Probably are expressed in roots, flowers and/or seeds.

The protein resides in the plastid. Its subcellular location is the chloroplast. It catalyses the reaction alpha-D-glucose 1-phosphate + ATP + H(+) = ADP-alpha-D-glucose + diphosphate. It participates in glycan biosynthesis; starch biosynthesis. Its activity is regulated as follows. Activated by 3'phosphoglycerate, inhibited by orthophosphate. Allosteric regulation. In terms of biological role, this protein plays a role in synthesis of starch. It catalyzes the synthesis of the activated glycosyl donor, ADP-glucose from Glc-1-P and ATP. This Arabidopsis thaliana (Mouse-ear cress) protein is Glucose-1-phosphate adenylyltransferase large subunit 3, chloroplastic (APL3).